A 280-amino-acid polypeptide reads, in one-letter code: Small ribosomal subunit protein uS3 (280 aa).

In terms of domain architecture, KH type-2 spans 38–106; it reads IRKLLATGLE…QVQLNILEVK (69 aa). Positions 216 to 280 are disordered; it reads AAAPAADRPR…SAGQPETTES (65 aa). Over residues 237 to 270 the composition is skewed to low complexity; it reads SGASGTTATSTDAGRAASEGTVEAPATEAAATAP.

The protein belongs to the universal ribosomal protein uS3 family. In terms of assembly, part of the 30S ribosomal subunit. Forms a tight complex with proteins S10 and S14.

In terms of biological role, binds the lower part of the 30S subunit head. Binds mRNA in the 70S ribosome, positioning it for translation. The chain is Small ribosomal subunit protein uS3 from Mycolicibacterium vanbaalenii (strain DSM 7251 / JCM 13017 / BCRC 16820 / KCTC 9966 / NRRL B-24157 / PYR-1) (Mycobacterium vanbaalenii).